Consider the following 503-residue polypeptide: Lysine--tRNA ligase (503 aa).

The Mg(2+) site is built by Glu414 and Glu421.

Belongs to the class-II aminoacyl-tRNA synthetase family. In terms of assembly, homodimer. Mg(2+) serves as cofactor.

The protein resides in the cytoplasm. It catalyses the reaction tRNA(Lys) + L-lysine + ATP = L-lysyl-tRNA(Lys) + AMP + diphosphate. This chain is Lysine--tRNA ligase, found in Neisseria gonorrhoeae (strain ATCC 700825 / FA 1090).